The sequence spans 265 residues: 3-methyl-2-oxobutanoate hydroxymethyltransferase (265 aa).

Aspartate 45 and aspartate 84 together coordinate Mg(2+). 3-methyl-2-oxobutanoate contacts are provided by residues 45–46 (DS), aspartate 84, and lysine 114. Mg(2+) is bound at residue glutamate 116. The active-site Proton acceptor is the glutamate 183.

It belongs to the PanB family. As to quaternary structure, homodecamer; pentamer of dimers. It depends on Mg(2+) as a cofactor.

It is found in the cytoplasm. The catalysed reaction is 3-methyl-2-oxobutanoate + (6R)-5,10-methylene-5,6,7,8-tetrahydrofolate + H2O = 2-dehydropantoate + (6S)-5,6,7,8-tetrahydrofolate. The protein operates within cofactor biosynthesis; (R)-pantothenate biosynthesis; (R)-pantoate from 3-methyl-2-oxobutanoate: step 1/2. Its function is as follows. Catalyzes the reversible reaction in which hydroxymethyl group from 5,10-methylenetetrahydrofolate is transferred onto alpha-ketoisovalerate to form ketopantoate. The sequence is that of 3-methyl-2-oxobutanoate hydroxymethyltransferase from Salinibacter ruber (strain DSM 13855 / M31).